Here is a 67-residue protein sequence, read N- to C-terminus: ATP synthase protein 8 (67 aa).

The chain crosses the membrane as a helical span at residues 8–24; sequence TWSITIMSMIMTLFIVF. An N6-acetyllysine; alternate modification is found at lysine 54. Lysine 54 bears the N6-succinyllysine; alternate mark. Lysine 57 carries the N6-acetyllysine modification.

Belongs to the ATPase protein 8 family. F-type ATPases have 2 components, CF(1) - the catalytic core - and CF(0) - the membrane proton channel. Component of an ATP synthase complex composed of ATP5PB, ATP5MC1, ATP5F1E, ATP5PD, ATP5ME, ATP5PF, ATP5MF, MT-ATP6, MT-ATP8, ATP5F1A, ATP5F1B, ATP5F1D, ATP5F1C, ATP5PO, ATP5MG, ATP5MK and ATP5MJ. Interacts with PRICKLE3.

The protein resides in the mitochondrion membrane. Mitochondrial membrane ATP synthase (F(1)F(0) ATP synthase or Complex V) produces ATP from ADP in the presence of a proton gradient across the membrane which is generated by electron transport complexes of the respiratory chain. F-type ATPases consist of two structural domains, F(1) - containing the extramembraneous catalytic core and F(0) - containing the membrane proton channel, linked together by a central stalk and a peripheral stalk. During catalysis, ATP synthesis in the catalytic domain of F(1) is coupled via a rotary mechanism of the central stalk subunits to proton translocation. Part of the complex F(0) domain. Minor subunit located with subunit a in the membrane. This chain is ATP synthase protein 8 (MT-ATP8), found in Felis silvestris lybica (African wildcat).